Reading from the N-terminus, the 200-residue chain is Max dimerization protein 3 (200 aa).

Disordered regions lie at residues 31 to 56 (SILPCDPATPGRRKRQRTNSNPDNVR) and 133 to 164 (RLLPPNTERIRTDSLDSSNLSSERSDSDQEDL). In terms of domain architecture, bHLH spans 54-106 (NVRSVHNELEKHRRAQLRRCLEQLKQQVPLSMENSRHTTLSLLHRAKQHIKKL).

As to quaternary structure, efficient DNA binding requires dimerization with another bHLH protein. Binds DNA as a heterodimer with MAX. As to expression, expressed broadly throughout the CNS and the eye, starting at neurula stages.

It is found in the nucleus. Its function is as follows. Transcriptional repressor. Binds with MAX to form a sequence-specific DNA-binding protein complex which recognizes the core sequence 5'-CAC[GA]TG-3'. The sequence is that of Max dimerization protein 3 (mxd3) from Xenopus laevis (African clawed frog).